Reading from the N-terminus, the 198-residue chain is FMN-dependent NADH:quinone oxidoreductase (198 aa).

FMN contacts are provided by residues Ser9 and 95-98; that span reads MYNF.

The protein belongs to the azoreductase type 1 family. Homodimer. Requires FMN as cofactor.

It catalyses the reaction 2 a quinone + NADH + H(+) = 2 a 1,4-benzosemiquinone + NAD(+). The catalysed reaction is N,N-dimethyl-1,4-phenylenediamine + anthranilate + 2 NAD(+) = 2-(4-dimethylaminophenyl)diazenylbenzoate + 2 NADH + 2 H(+). Its function is as follows. Quinone reductase that provides resistance to thiol-specific stress caused by electrophilic quinones. Also exhibits azoreductase activity. Catalyzes the reductive cleavage of the azo bond in aromatic azo compounds to the corresponding amines. The sequence is that of FMN-dependent NADH:quinone oxidoreductase from Alcanivorax borkumensis (strain ATCC 700651 / DSM 11573 / NCIMB 13689 / SK2).